A 210-amino-acid polypeptide reads, in one-letter code: Protein GET1 (210 aa).

The Lumenal portion of the chain corresponds to 1-4 (MASL). A helical transmembrane segment spans residues 5 to 24 (LIIVFLSHVVTYLINTIGAT). Residues 25-110 (TVDNLLWLLY…SFDLTVKSVR (86 aa)) lie on the Cytoplasmic side of the membrane. The stretch at 43-97 (RTAVEQRRLKGEVVQLKREMKSTSSQDEFAKWAKLRRRHDKAMEEYEAKNKALGK) forms a coiled coil. Residues 111–131 (FFSTTGLKFFLQFWYSKTPMF) form a helical membrane-spanning segment. At 132–155 (ELPRGWVPWQVEWVLSFPRAPLGT) the chain is on the lumenal side. The helical transmembrane segment at 156 to 172 (VSIQVWSGVCTTVVSLA) threads the bilayer. The Cytoplasmic segment spans residues 173 to 210 (GDALGVVIQSLILKMTKRGVARTSEGRPSQPMALKKEL).

This sequence belongs to the WRB/GET1 family. As to quaternary structure, interacts with GET3.

The protein localises to the endoplasmic reticulum membrane. Required for the post-translational delivery of tail-anchored (TA) proteins to the endoplasmic reticulum. Acts as a membrane receptor for soluble GET3, which recognizes and selectively binds the transmembrane domain of TA proteins in the cytosol. This is Protein GET1 from Uncinocarpus reesii (strain UAMH 1704).